A 96-amino-acid chain; its full sequence is Protein Vpr (96 aa).

The tract at residues methionine 1–leucine 42 is homooligomerization. A phosphoserine; by host mark is found at serine 79, serine 94, and serine 96.

Belongs to the HIV-1 VPR protein family. In terms of assembly, homooligomer, may form homodimer. Interacts with p6-gag region of the Pr55 Gag precursor protein through a (Leu-X-X)4 motif near the C-terminus of the P6gag protein. Interacts with host UNG. May interact with host RAD23A/HHR23A. Interacts with host VPRBP/DCAF1, leading to hijack the CUL4A-RBX1-DDB1-DCAF1/VPRBP complex, mediating ubiquitination of host proteins such as TERT and ZGPAT and arrest of the cell cycle in G2 phase. Phosphorylated on several residues by host. These phosphorylations regulate VPR activity for the nuclear import of the HIV-1 pre-integration complex.

The protein localises to the virion. It localises to the host nucleus. Its subcellular location is the host extracellular space. Its function is as follows. During virus replication, may deplete host UNG protein, and incude G2-M cell cycle arrest. Acts by targeting specific host proteins for degradation by the 26S proteasome, through association with the cellular CUL4A-DDB1 E3 ligase complex by direct interaction with host VPRPB/DCAF-1. Cell cycle arrest reportedly occurs within hours of infection and is not blocked by antiviral agents, suggesting that it is initiated by the VPR carried into the virion. Additionally, VPR induces apoptosis in a cell cycle dependent manner suggesting that these two effects are mechanistically linked. Detected in the serum and cerebrospinal fluid of AIDS patient, VPR may also induce cell death to bystander cells. In terms of biological role, during virus entry, plays a role in the transport of the viral pre-integration (PIC) complex to the host nucleus. This function is crucial for viral infection of non-dividing macrophages. May act directly at the nuclear pore complex, by binding nucleoporins phenylalanine-glycine (FG)-repeat regions. The chain is Protein Vpr from Human immunodeficiency virus type 1 group M subtype K (isolate 97ZR-EQTB11) (HIV-1).